Reading from the N-terminus, the 222-residue chain is Nucleoside triphosphate pyrophosphatase (222 aa).

Asp82 serves as the catalytic Proton acceptor.

The protein belongs to the Maf family. A divalent metal cation serves as cofactor.

It is found in the cytoplasm. The enzyme catalyses a ribonucleoside 5'-triphosphate + H2O = a ribonucleoside 5'-phosphate + diphosphate + H(+). It catalyses the reaction a 2'-deoxyribonucleoside 5'-triphosphate + H2O = a 2'-deoxyribonucleoside 5'-phosphate + diphosphate + H(+). Its function is as follows. Nucleoside triphosphate pyrophosphatase. May have a dual role in cell division arrest and in preventing the incorporation of modified nucleotides into cellular nucleic acids. This is Nucleoside triphosphate pyrophosphatase from Mycobacterium bovis (strain ATCC BAA-935 / AF2122/97).